The sequence spans 164 residues: R-phycoerythrin alpha chain (164 aa).

2 residues coordinate (2R,3E)-phycoerythrobilin: Cys82 and Cys139.

This sequence belongs to the phycobiliprotein family. In terms of assembly, heterodimer of an alpha and a beta chain. In terms of processing, contains two covalently linked bilin chromophores.

It is found in the plastid. Its subcellular location is the chloroplast thylakoid membrane. In terms of biological role, light-harvesting photosynthetic bile pigment-protein from the phycobiliprotein complex. This Pyropia haitanensis (Red seaweed) protein is R-phycoerythrin alpha chain (cpeA).